Here is a 306-residue protein sequence, read N- to C-terminus: Reticulocalbin-2 (306 aa).

The signal sequence occupies residues 1-22 (MESPTLLGLLLLLLGGPGTSLG). 6 EF-hand domains span residues 50–85 (EQQKRLKVIISRIDVDLDGFLTEAELSSWIQHSFKS), 86–121 (YIIEDAKQQFQHYDKDGDGRVSWEEYNIQMYDRVID), 144–173 (KKRFQKANKDGDSHLDFEEFAAFEHPEEAD), 175–210 (MKEFVIQESLEEHDKDGDGFVSLQEFLGDYRRDPAA), 226–251 (NDYDKDKDGKLSPKELLTWVMPNNEG), and 252–287 (LAQEEAVHLLDEMDLDGDRRLSANEILENQDLFLNS). Residues aspartate 99, aspartate 101, aspartate 103, arginine 105, and glutamate 110 each contribute to the Ca(2+) site. Ca(2+) contacts are provided by aspartate 188, aspartate 190, aspartate 192, glutamate 199, aspartate 229, aspartate 231, aspartate 233, lysine 235, glutamate 240, aspartate 265, aspartate 267, aspartate 269, arginine 271, and glutamate 276.

Belongs to the CREC family. As to quaternary structure, may bind phospholipase A2, since the rat reticulocalbin-2 has been isolated on the phospholipase complex taipoxin columns. As to expression, expressed by the venom gland.

Its subcellular location is the secreted. The protein is Reticulocalbin-2 of Crotalus adamanteus (Eastern diamondback rattlesnake).